Here is a 304-residue protein sequence, read N- to C-terminus: MLPPPRPAAALALPVLLLLLVVLTPPPTGARPSPGPDYLRRGWMRLLAEGEGCAPCRPEECAAPRGCLAGRVRDACGCCWECANLEGQLCDLDPSAHFYGHCGEQLECRLDTGGDLSRGEVPEPLCACRSQSPLCGSDGHTYSQICRLQEAARARPDANLTVAHPGPCESGPQIVSHPYDTWNVTGQDVIFGCEVFAYPMASIEWRKDGLDIQLPGDDPHISVQFRGGPQRFEVTGWLQIQAVRPSDEGTYRCLGRNALGQVEAPASLTVLTPDQLNSTGIPQLRSLNLVPEEEAESEENDDYY.

Positions 1-30 (MLPPPRPAAALALPVLLLLLVVLTPPPTGA) are cleaved as a signal peptide. The region spanning 49–129 (EGEGCAPCRP…EVPEPLCACR (81 aa)) is the IGFBP N-terminal domain. 7 disulfides stabilise this stretch: C53–C76, C56–C78, C61–C79, C67–C82, C90–C108, C102–C126, and C135–C168. One can recognise a Kazal-like domain in the interval 120–170 (EVPEPLCACRSQSPLCGSDGHTYSQICRLQEAARARPDANLTVAHPGPCES). N-linked (GlcNAc...) asparagine glycosylation is found at N159 and N183. In terms of domain architecture, Ig-like C2-type spans 172–269 (PQIVSHPYDT…GQVEAPASLT (98 aa)). A disulfide bond links C193 and C253. An N-linked (GlcNAc...) asparagine glycan is attached at N277.

It is found in the secreted. Its subcellular location is the extracellular space. The protein localises to the extracellular matrix. Its function is as follows. Involved in the proliferation of osteoblasts during bone formation and bone regeneration. Promotes matrix assembly. This chain is Kazal-type serine protease inhibitor domain-containing protein 1 (KAZALD1), found in Homo sapiens (Human).